Here is a 508-residue protein sequence, read N- to C-terminus: Probable malate:quinone oxidoreductase (508 aa).

The protein belongs to the MQO family. Requires FAD as cofactor.

The catalysed reaction is (S)-malate + a quinone = a quinol + oxaloacetate. It functions in the pathway carbohydrate metabolism; tricarboxylic acid cycle; oxaloacetate from (S)-malate (quinone route): step 1/1. The polypeptide is Probable malate:quinone oxidoreductase (Chromohalobacter salexigens (strain ATCC BAA-138 / DSM 3043 / CIP 106854 / NCIMB 13768 / 1H11)).